Here is a 133-residue protein sequence, read N- to C-terminus: Small ribosomal subunit protein bS6 (133 aa).

Residues 93–133 are disordered; the sequence is KTAVTEPSPMMKEEPRRERRDDSAPRQERAEKKTETTEDNA. The segment covering 103-133 has biased composition (basic and acidic residues); it reads MKEEPRRERRDDSAPRQERAEKKTETTEDNA.

Belongs to the bacterial ribosomal protein bS6 family.

Functionally, binds together with bS18 to 16S ribosomal RNA. This chain is Small ribosomal subunit protein bS6, found in Alteromonas mediterranea (strain DSM 17117 / CIP 110805 / LMG 28347 / Deep ecotype).